The sequence spans 242 residues: Caspase-14 (242 aa).

A propeptide spanning residues 1-5 is cleaved from the precursor; that stretch reads MSNPR. Catalysis depends on residues histidine 89 and cysteine 132. Residues 147-152 constitute a propeptide that is removed on maturation; sequence EIVMVI.

It belongs to the peptidase C14A family. As to quaternary structure, heterodimer of a large and a small subunit, both processed from the precursor; the mature active form is a p17/p10 dimer and the intermediate form a p20/p8 dimer. In terms of processing, maturation by proteolytic processing appears to be a two-step process. The precursor is processed by KLK7 to yield the p20/p8 intermediate form which acts on the precursor to yield the p17/p10 mature form. Initially, cleavage between Ile-152 and Lys-153 has been proposed to yield the large and small subunits of the active enzyme. Expressed in keratinocytes of adult skin suprabasal layers (from spinous layers to the stratum granulosum and stratum corneum) (at protein level). Expressed in keratinocytes of hair shaft and sebaceous glands (at protein level). In psoriatic skin only expressed at very low levels. The p17/10 mature form is expressed in epidermis stratum corneum, the p20/p8 intermediate form in epidermis upper granular cells of the stratum granulosum.

The protein localises to the cytoplasm. It is found in the nucleus. With respect to regulation, inhibited by caspase-1 inhibitor YVAD-FMK and the pan-caspase inhibitor VAD-FMK. Functionally, non-apoptotic caspase involved in epidermal differentiation. Is the predominant caspase in epidermal stratum corneum. Seems to play a role in keratinocyte differentiation and is required for cornification. Regulates maturation of the epidermis by proteolytically processing filaggrin. In vitro has a preference for the substrate [WY]-X-X-D motif and is active on the synthetic caspase substrate WEHD-ACF. Involved in processing of prosaposin in the epidermis. May be involved in retinal pigment epithelium cell barrier function. Involved in DNA degradation in differentiated keratinocytes probably by cleaving DFFA/ICAD leading to liberation of DFFB/CAD. In Homo sapiens (Human), this protein is Caspase-14 (CASP14).